A 156-amino-acid polypeptide reads, in one-letter code: Small ribosomal subunit protein uS7 (156 aa).

Belongs to the universal ribosomal protein uS7 family. In terms of assembly, part of the 30S ribosomal subunit. Contacts proteins S9 and S11.

Its function is as follows. One of the primary rRNA binding proteins, it binds directly to 16S rRNA where it nucleates assembly of the head domain of the 30S subunit. Is located at the subunit interface close to the decoding center, probably blocks exit of the E-site tRNA. The polypeptide is Small ribosomal subunit protein uS7 (Leuconostoc citreum (strain KM20)).